The primary structure comprises 75 residues: Small ribosomal subunit protein bS18 (75 aa).

Belongs to the bacterial ribosomal protein bS18 family. Part of the 30S ribosomal subunit. Forms a tight heterodimer with protein bS6.

Functionally, binds as a heterodimer with protein bS6 to the central domain of the 16S rRNA, where it helps stabilize the platform of the 30S subunit. This chain is Small ribosomal subunit protein bS18, found in Acinetobacter baumannii (strain AB307-0294).